We begin with the raw amino-acid sequence, 167 residues long: Peptidyl-prolyl cis-trans isomerase-like 3 (167 aa).

One can recognise a PPIase cyclophilin-type domain in the interval 1–160 (MSVTLHTSHG…EPVRIENVTI (160 aa)).

The protein belongs to the cyclophilin-type PPIase family. PPIL3 subfamily.

It catalyses the reaction [protein]-peptidylproline (omega=180) = [protein]-peptidylproline (omega=0). In terms of biological role, PPIases accelerate the folding of proteins. It catalyzes the cis-trans isomerization of proline imidic peptide bonds in oligopeptides. The sequence is that of Peptidyl-prolyl cis-trans isomerase-like 3 (CYP10) from Gibberella zeae (strain ATCC MYA-4620 / CBS 123657 / FGSC 9075 / NRRL 31084 / PH-1) (Wheat head blight fungus).